We begin with the raw amino-acid sequence, 83 residues long: Large ribosomal subunit protein bL27 (83 aa).

The tract at residues 1 to 22 is disordered; that stretch reads MAHKKGQGSTRNGRDSHSKRLG.

The protein belongs to the bacterial ribosomal protein bL27 family.

This chain is Large ribosomal subunit protein bL27, found in Protochlamydia amoebophila (strain UWE25).